The primary structure comprises 613 residues: Thymidine kinase (613 aa).

2 disordered regions span residues Met1 to Ser233 and Ser253 to Arg276. A compositionally biased stretch (low complexity) spans Phe8 to Ala18. Positions Pro78–Lys88 are enriched in basic and acidic residues. Over residues Leu114–Asp126 the composition is skewed to basic residues. Positions His199–Gly218 are enriched in basic and acidic residues. ATP is bound at residue Gly301–Thr308. Glu327 acts as the Proton acceptor in catalysis. Residues Tyr344, Gln365, and Arg461 each contribute to the substrate site.

This sequence belongs to the herpesviridae thymidine kinase family. Homodimer.

It catalyses the reaction thymidine + ATP = dTMP + ADP + H(+). Functionally, catalyzes the transfer of the gamma-phospho group of ATP to thymidine to generate dTMP in the salvage pathway of pyrimidine synthesis. The dTMP serves as a substrate for DNA polymerase during viral DNA replication. Allows the virus to be reactivated and to grow in non-proliferative cells lacking a high concentration of phosphorylated nucleic acid precursors. This chain is Thymidine kinase, found in Equine herpesvirus 2 (strain 86/87) (EHV-2).